The following is a 43-amino-acid chain: Parvalbumin beta (43 aa).

2 EF-hand domains span residues 1–20 (KVFE…LKLF) and 22–43 (LSSA…ALVK). Residues D7, D9, S11, F12, E14, E16, and E37 each contribute to the Ca(2+) site.

In terms of tissue distribution, detected in muscle and cutaneous mucus. In the skin, detected in cells in the basal region of the glandular epithelium of the dermal mucus glands (at protein level).

It localises to the cytoplasm. Its subcellular location is the secreted. Functionally, in muscle, parvalbumin is thought to be involved in relaxation after contraction. It binds two calcium ions. This is Parvalbumin beta from Rana temporaria (European common frog).